The chain runs to 281 residues: Fructose-bisphosphate aldolase class 1 (281 aa).

Lys191 (schiff-base intermediate with dihydroxyacetone-P) is an active-site residue.

This sequence belongs to the DeoC/FbaB aldolase family. As to quaternary structure, homooctamer.

Its subcellular location is the cytoplasm. It localises to the chromosome. It catalyses the reaction beta-D-fructose 1,6-bisphosphate = D-glyceraldehyde 3-phosphate + dihydroxyacetone phosphate. Its activity is regulated as follows. Activated by citrate. In Thermococcus kodakarensis (strain ATCC BAA-918 / JCM 12380 / KOD1) (Pyrococcus kodakaraensis (strain KOD1)), this protein is Fructose-bisphosphate aldolase class 1 (fba).